We begin with the raw amino-acid sequence, 220 residues long: Deoxyribose-phosphate aldolase (220 aa).

The Proton donor/acceptor role is filled by Asp-89. Catalysis depends on Lys-151, which acts as the Schiff-base intermediate with acetaldehyde. Lys-180 serves as the catalytic Proton donor/acceptor.

This sequence belongs to the DeoC/FbaB aldolase family. DeoC type 1 subfamily.

The protein localises to the cytoplasm. The catalysed reaction is 2-deoxy-D-ribose 5-phosphate = D-glyceraldehyde 3-phosphate + acetaldehyde. It participates in carbohydrate degradation; 2-deoxy-D-ribose 1-phosphate degradation; D-glyceraldehyde 3-phosphate and acetaldehyde from 2-deoxy-alpha-D-ribose 1-phosphate: step 2/2. Functionally, catalyzes a reversible aldol reaction between acetaldehyde and D-glyceraldehyde 3-phosphate to generate 2-deoxy-D-ribose 5-phosphate. The chain is Deoxyribose-phosphate aldolase from Thermus thermophilus (strain ATCC BAA-163 / DSM 7039 / HB27).